The primary structure comprises 660 residues: Bifunctional polymyxin resistance protein ArnA (660 aa).

Positions 1–304 (MKTVVFAYHD…TLGLVQGSRL (304 aa)) are formyltransferase ArnAFT. 86–88 (HLI) contributes to the (6R)-10-formyltetrahydrofolate binding site. Residue H104 is the Proton donor; for formyltransferase activity of the active site. Residues R114 and 136–140 (VKRAD) each bind (6R)-10-formyltetrahydrofolate. Residues 314–660 (RRTRVLILGV…RTVDLTDKPS (347 aa)) form a dehydrogenase ArnADH region. NAD(+) is bound by residues D347 and 368 to 369 (DI). Residues A393, Y398, and 432–433 (TS) contribute to the UDP-alpha-D-glucuronate site. Catalysis depends on E434, which acts as the Proton acceptor; for decarboxylase activity. UDP-alpha-D-glucuronate contacts are provided by residues R460, N492, 526–535 (KLIDGGKQKR), and Y613. R619 acts as the Proton donor; for decarboxylase activity in catalysis.

It in the N-terminal section; belongs to the Fmt family. UDP-L-Ara4N formyltransferase subfamily. This sequence in the C-terminal section; belongs to the NAD(P)-dependent epimerase/dehydratase family. UDP-glucuronic acid decarboxylase subfamily. In terms of assembly, homohexamer, formed by a dimer of trimers.

The catalysed reaction is UDP-alpha-D-glucuronate + NAD(+) = UDP-beta-L-threo-pentopyranos-4-ulose + CO2 + NADH. The enzyme catalyses UDP-4-amino-4-deoxy-beta-L-arabinose + (6R)-10-formyltetrahydrofolate = UDP-4-deoxy-4-formamido-beta-L-arabinose + (6S)-5,6,7,8-tetrahydrofolate + H(+). It participates in nucleotide-sugar biosynthesis; UDP-4-deoxy-4-formamido-beta-L-arabinose biosynthesis; UDP-4-deoxy-4-formamido-beta-L-arabinose from UDP-alpha-D-glucuronate: step 1/3. It functions in the pathway nucleotide-sugar biosynthesis; UDP-4-deoxy-4-formamido-beta-L-arabinose biosynthesis; UDP-4-deoxy-4-formamido-beta-L-arabinose from UDP-alpha-D-glucuronate: step 3/3. Its pathway is bacterial outer membrane biogenesis; lipopolysaccharide biosynthesis. In terms of biological role, bifunctional enzyme that catalyzes the oxidative decarboxylation of UDP-glucuronic acid (UDP-GlcUA) to UDP-4-keto-arabinose (UDP-Ara4O) and the addition of a formyl group to UDP-4-amino-4-deoxy-L-arabinose (UDP-L-Ara4N) to form UDP-L-4-formamido-arabinose (UDP-L-Ara4FN). The modified arabinose is attached to lipid A and is required for resistance to polymyxin and cationic antimicrobial peptides. The chain is Bifunctional polymyxin resistance protein ArnA from Escherichia coli O127:H6 (strain E2348/69 / EPEC).